The sequence spans 101 residues: Small ribosomal subunit protein uS10 (101 aa).

This sequence belongs to the universal ribosomal protein uS10 family. Part of the 30S ribosomal subunit.

Functionally, involved in the binding of tRNA to the ribosomes. The polypeptide is Small ribosomal subunit protein uS10 (Corynebacterium efficiens (strain DSM 44549 / YS-314 / AJ 12310 / JCM 11189 / NBRC 100395)).